The primary structure comprises 600 residues: Methylenetetrahydrofolate reductase 2 (600 aa).

Glu22 (proton donor/acceptor) is an active-site residue. Residues 22–27 (EYFVPK) and 54–55 (TW) each bind NAD(+). Residues 54–55 (TW), His84, 114–116 (RGD), 133–134 (YA), Tyr156, Asp171, and Lys178 each bind FAD. Substrate is bound at residue Asp116. The substrate site is built by Gln189 and Tyr282.

It belongs to the methylenetetrahydrofolate reductase family. It depends on FAD as a cofactor.

It carries out the reaction (6S)-5-methyl-5,6,7,8-tetrahydrofolate + NADP(+) = (6R)-5,10-methylene-5,6,7,8-tetrahydrofolate + NADPH + H(+). Its pathway is one-carbon metabolism; tetrahydrofolate interconversion. In Saccharomyces cerevisiae (strain ATCC 204508 / S288c) (Baker's yeast), this protein is Methylenetetrahydrofolate reductase 2 (MET13).